The chain runs to 225 residues: Cytidylate kinase (225 aa).

An ATP-binding site is contributed by 12-20 (GPSGAGKGT).

Belongs to the cytidylate kinase family. Type 1 subfamily.

The protein resides in the cytoplasm. The catalysed reaction is CMP + ATP = CDP + ADP. It catalyses the reaction dCMP + ATP = dCDP + ADP. The chain is Cytidylate kinase from Pectobacterium carotovorum subsp. carotovorum (strain PC1).